Reading from the N-terminus, the 332-residue chain is Phospho-N-acetylmuramoyl-pentapeptide-transferase (332 aa).

The next 8 membrane-spanning stretches (helical) occupy residues 9-29, 55-75, 79-99, 115-135, 155-175, 196-216, 253-273, and 312-332; these read IYTI…IIPF, TIGG…AGLI, LWVA…DDFI, MSLQ…ISVM, IPQY…VVVA, IVAA…LAIF, AVAI…IYFA, and VVIV…LGLN.

This sequence belongs to the glycosyltransferase 4 family. MraY subfamily. It depends on Mg(2+) as a cofactor.

It localises to the cell membrane. It carries out the reaction UDP-N-acetyl-alpha-D-muramoyl-L-alanyl-gamma-D-glutamyl-meso-2,6-diaminopimeloyl-D-alanyl-D-alanine + di-trans,octa-cis-undecaprenyl phosphate = di-trans,octa-cis-undecaprenyl diphospho-N-acetyl-alpha-D-muramoyl-L-alanyl-D-glutamyl-meso-2,6-diaminopimeloyl-D-alanyl-D-alanine + UMP. It functions in the pathway cell wall biogenesis; peptidoglycan biosynthesis. Functionally, catalyzes the initial step of the lipid cycle reactions in the biosynthesis of the cell wall peptidoglycan: transfers peptidoglycan precursor phospho-MurNAc-pentapeptide from UDP-MurNAc-pentapeptide onto the lipid carrier undecaprenyl phosphate, yielding undecaprenyl-pyrophosphoryl-MurNAc-pentapeptide, known as lipid I. In Alkaliphilus oremlandii (strain OhILAs) (Clostridium oremlandii (strain OhILAs)), this protein is Phospho-N-acetylmuramoyl-pentapeptide-transferase.